A 223-amino-acid polypeptide reads, in one-letter code: Octanoyltransferase (223 aa).

The 176-residue stretch at 32-207 folds into the BPL/LPL catalytic domain; that stretch reads DETPDEIWLV…HFAHHLAITD (176 aa). Residues 71 to 78, 138 to 140, and 151 to 153 contribute to the substrate site; these read RGGQVTYH, SLG, and GLA. Cys169 functions as the Acyl-thioester intermediate in the catalytic mechanism.

It belongs to the LipB family.

It is found in the cytoplasm. It catalyses the reaction octanoyl-[ACP] + L-lysyl-[protein] = N(6)-octanoyl-L-lysyl-[protein] + holo-[ACP] + H(+). It participates in protein modification; protein lipoylation via endogenous pathway; protein N(6)-(lipoyl)lysine from octanoyl-[acyl-carrier-protein]: step 1/2. Its function is as follows. Catalyzes the transfer of endogenously produced octanoic acid from octanoyl-acyl-carrier-protein onto the lipoyl domains of lipoate-dependent enzymes. Lipoyl-ACP can also act as a substrate although octanoyl-ACP is likely to be the physiological substrate. The protein is Octanoyltransferase of Erwinia tasmaniensis (strain DSM 17950 / CFBP 7177 / CIP 109463 / NCPPB 4357 / Et1/99).